The chain runs to 163 residues: Campylobacter invasion antigen D (163 aa).

The MKD motif lies at 135–145; it reads KKDDLENRLNL.

In terms of assembly, interacts with the host cell protein IQGAP1, thus displacing RACGAP1 from the IQGAP1 complex.

Its subcellular location is the secreted. It is found in the host cytoplasm. The protein localises to the host cytosol. Functionally, effector protein required for the development of acute disease and colon inflammatory lesions. Required for maximal host cell invasion and maximal secretion of the inflammatory chemokine interleukin-8 (IL-8) from host cells. Acts by activating the host MAP kinase signaling pathways ERK-1/2 and p38 to promote both cellular invasion and the release of IL-8. CiaD mediated activation of ERK-1/2 leads to the phosphorylation of host cortactin (CTTN) on serine residues and association of cortactin with N-WASP, promoting actin cytoskeleton rearrangement, membrane ruffling and host cell invasion. In addition, maximal host cell invasion requires interaction with the host cell protein IQGAP1, a Ras GTPase-activating-like protein. Binding to IQGAP1 facilitates the activation of the Rho GTPases RAC1 and CDC42, further promoting actin reorganization and bacterial uptake. CiaD promotes RAC1 activation by excluding RACGAP1 from the IQGAP1 complex, preventing the deactivation of RAC1. CiaD probably activates ERK signaling upstream or independently of IQGAP1. The sequence is that of Campylobacter invasion antigen D from Campylobacter jejuni subsp. jejuni serotype O:2 (strain ATCC 700819 / NCTC 11168).